A 158-amino-acid chain; its full sequence is Transcription elongation factor GreA (158 aa).

Positions 4-75 (EKTYPMTQEG…TQLENMIRNA (72 aa)) form a coiled coil.

Belongs to the GreA/GreB family.

Its function is as follows. Necessary for efficient RNA polymerase transcription elongation past template-encoded arresting sites. The arresting sites in DNA have the property of trapping a certain fraction of elongating RNA polymerases that pass through, resulting in locked ternary complexes. Cleavage of the nascent transcript by cleavage factors such as GreA or GreB allows the resumption of elongation from the new 3'terminus. GreA releases sequences of 2 to 3 nucleotides. The sequence is that of Transcription elongation factor GreA from Bacillus anthracis (strain A0248).